Reading from the N-terminus, the 365-residue chain is Isoflavone 4'-O-methyltransferase (365 aa).

Residues 207–210 (VAGG), Asp-231, 231–232 (DQ), 251–252 (DM), and Lys-265 contribute to the S-adenosyl-L-methionine site. The active-site Proton acceptor is the His-269.

The protein belongs to the class I-like SAM-binding methyltransferase superfamily. Cation-independent O-methyltransferase family. COMT subfamily.

The catalysed reaction is a 4'-hydroxyisoflavone + S-adenosyl-L-methionine = a 4'-methoxyisoflavone + S-adenosyl-L-homocysteine + H(+). The enzyme catalyses (2R,3S)-2,4',7-trihydroxyisoflavanone + S-adenosyl-L-methionine = (2R,3S)-2,7-dihydroxy-4'-methoxyisoflavanone + S-adenosyl-L-homocysteine + H(+). Functionally, 2-hydroxyisoflavanone 4'-O-methyltransferase involved in the biosynthesis of formononetin. Can use 2,7,4'-trihydroxyisoflavanone as substrate, but not daidzein. In Lotus japonicus (Lotus corniculatus var. japonicus), this protein is Isoflavone 4'-O-methyltransferase (HI4'OMT).